Reading from the N-terminus, the 448-residue chain is Beta-glucosidase B (448 aa).

Catalysis depends on E167, which acts as the Proton donor. E356 serves as the catalytic Nucleophile.

This sequence belongs to the glycosyl hydrolase 1 family.

It catalyses the reaction Hydrolysis of terminal, non-reducing beta-D-glucosyl residues with release of beta-D-glucose.. The sequence is that of Beta-glucosidase B (bglB) from Paenibacillus polymyxa (Bacillus polymyxa).